A 1495-amino-acid chain; its full sequence is MEANKNTYSRLGDTIETVERIEFCINSNESIIRHSAIVDPNGITEAETFNSNNNEPVQGGVIDKRLGVTESHLECSTCGETALRCPGHFGHIKFVEPVFHMGYLIYLKHILSCICIRCNKLLVYKNEKEIAALIKNKQGKQRFAEIRSICKKVTHCQKENYGCGTPAHKISIDKRNGNIFLLAEPVKRTDEYDETGETRKRPQQILTPQLCYDILKSVSDEDCIIMGFDPAKSRPEDMIILNFPVPPVQVRPSIRAEILSSPTMDDDLTHKLIDIIKSNENLKNTKGDGSLIKYTSINDDFMLLQLHVATFFANDMAGLARSQQKNKKVTKSMSERLRGKEGRIRGNLMGKRVDMSARTVITSDPNIALNEVGVPLIIAKNLTFDEIVTEHNIEYLTQLVKNGKRVYPGANFVIKHVIDAEGNESGHIYHLKYVDKPISLKPGDIVKRQLIDGDIVIFNRQPSLHKLSMMGHKCHVIPDNNLLTFRVNVSVTDPYNADFDGDEMNLHVPQSIQTATEILLIANASRRFVSPATSNIAIKAKQDTLMGSYVQTEPDMEIDWRDAMSILMSTSVKLDNDIPKYQNVSGKFLYSQIIPEGLNITKRKNDKEFQLKIKNGELTDGTLGKSEISSILQRIWFQYGSKETQEFIDDAQRMILQFLMRYGYTVSIKDTVIGEKVNQYIYDLIETKRKETLAFITEYDNDPYVMTKDAFEIKLQENLKSVQDEIKNTVMRNFDKNSGIFIAISSGSSGEPMNAGQIAGCIGQVIVEGKRIQIRFNGRTLPMFPKFDDSAFSRGFCRNSFIEGLGPFEFFFQVMAGREGIINTAIKTADTGYIQRKLVKMLEDIKQEYDGTVRNANGKLISCVYGDNGINTENQVDQKIDLISANDNKVRNDYVYTEDEIKYLIKNHKTDKRYTTDLNNSLYRKLISMRDQLRRIQRLVNLTSAEFKETYKMPVDIQQFIFNIINRDVRNNNVVVDPYYVLKMIKDMYYGSDSKIMKYNNRTSRIKKEDEKRIKFLMKIYLYDVLAPKKCTHVYKFSKQEFDEIVDYFKKTIMLAKVEGGEMVGFVAAQSIGEPVTQTNLKSFHKSGTGKTVSGGLVRVKELLGISKNIKTPITEIILEEKYKNDKITASRIASYLKYTTLRDVVEKADVIYDPEPFSKDGLMKKDGVDNIFDQEQGKTGCQTDIKNLPWVLRIMLSKEKMIERNINMLEIKTSFCRNWGTRNEDKTSKKEFNKVIDKITQCAIVTNYDNSQVPIVHVRFDANNYNLNTLIQFQEMVINTYKIKGISNITESNNIIEESYVDFDDEGNVVKKKQYVIIAEGINLSEMSQINGIDLLRTKCNDIVTIYEMYGVEAARTAFIKEFTAAIESSGGFSNYQHIEILADAITHMGGLIPVNRHGANKLDTDPFSRASFEKTVEQLLAAAVFGESDHMRSVSARIMVGALINGGTGCFDLLLDHKKIQQSLVESEEVVAPVVPIKKKTVLDDLISKKKSK.

It belongs to the RNA polymerase beta' chain family.

It is found in the virion. The catalysed reaction is RNA(n) + a ribonucleoside 5'-triphosphate = RNA(n+1) + diphosphate. In terms of biological role, DNA-dependent RNA polymerase catalyzes the transcription of DNA into RNA using the four ribonucleoside triphosphates as substrates. This chain is DNA-directed RNA polymerase subunit 1 (RPO1), found in Acanthamoeba polyphaga (Amoeba).